The chain runs to 381 residues: Transaldolase 2 (381 aa).

The active-site Schiff-base intermediate with substrate is Lys141.

The protein belongs to the transaldolase family. Type 2 subfamily.

Its subcellular location is the cytoplasm. The catalysed reaction is D-sedoheptulose 7-phosphate + D-glyceraldehyde 3-phosphate = D-erythrose 4-phosphate + beta-D-fructose 6-phosphate. It functions in the pathway carbohydrate degradation; pentose phosphate pathway; D-glyceraldehyde 3-phosphate and beta-D-fructose 6-phosphate from D-ribose 5-phosphate and D-xylulose 5-phosphate (non-oxidative stage): step 2/3. Transaldolase is important for the balance of metabolites in the pentose-phosphate pathway. The sequence is that of Transaldolase 2 (tal2) from Nostoc sp. (strain PCC 7120 / SAG 25.82 / UTEX 2576).